Reading from the N-terminus, the 343-residue chain is Probable transposase for insertion sequence element (343 aa).

It belongs to the transposase mutator family.

In terms of biological role, required for the transposition of the insertion element. The polypeptide is Probable transposase for insertion sequence element (Corynebacterium diphtheriae).